The primary structure comprises 104 residues: Iron-sulfur cluster assembly protein CyaY (104 aa).

It belongs to the frataxin family.

Involved in iron-sulfur (Fe-S) cluster assembly. May act as a regulator of Fe-S biogenesis. This is Iron-sulfur cluster assembly protein CyaY from Aliivibrio salmonicida (strain LFI1238) (Vibrio salmonicida (strain LFI1238)).